Here is a 251-residue protein sequence, read N- to C-terminus: Imidazole glycerol phosphate synthase subunit HisF (251 aa).

Active-site residues include D11 and D130.

This sequence belongs to the HisA/HisF family. As to quaternary structure, heterodimer of HisH and HisF.

The protein localises to the cytoplasm. It catalyses the reaction 5-[(5-phospho-1-deoxy-D-ribulos-1-ylimino)methylamino]-1-(5-phospho-beta-D-ribosyl)imidazole-4-carboxamide + L-glutamine = D-erythro-1-(imidazol-4-yl)glycerol 3-phosphate + 5-amino-1-(5-phospho-beta-D-ribosyl)imidazole-4-carboxamide + L-glutamate + H(+). It participates in amino-acid biosynthesis; L-histidine biosynthesis; L-histidine from 5-phospho-alpha-D-ribose 1-diphosphate: step 5/9. Functionally, IGPS catalyzes the conversion of PRFAR and glutamine to IGP, AICAR and glutamate. The HisF subunit catalyzes the cyclization activity that produces IGP and AICAR from PRFAR using the ammonia provided by the HisH subunit. This is Imidazole glycerol phosphate synthase subunit HisF from Bacteroides thetaiotaomicron (strain ATCC 29148 / DSM 2079 / JCM 5827 / CCUG 10774 / NCTC 10582 / VPI-5482 / E50).